An 81-amino-acid polypeptide reads, in one-letter code: Large ribosomal subunit protein bL31B (81 aa).

Belongs to the bacterial ribosomal protein bL31 family. Type B subfamily. In terms of assembly, part of the 50S ribosomal subunit.

The protein is Large ribosomal subunit protein bL31B of Bacillus licheniformis (strain ATCC 14580 / DSM 13 / JCM 2505 / CCUG 7422 / NBRC 12200 / NCIMB 9375 / NCTC 10341 / NRRL NRS-1264 / Gibson 46).